The primary structure comprises 51 residues: Large ribosomal subunit protein eL39 (51 aa).

The protein belongs to the eukaryotic ribosomal protein eL39 family.

This chain is Large ribosomal subunit protein eL39, found in Staphylothermus marinus (strain ATCC 43588 / DSM 3639 / JCM 9404 / F1).